The following is a 372-amino-acid chain: Alanine dehydrogenase 2 (372 aa).

Histidine 95 is an active-site residue. 169-199 (KVTIIGGGQAGTNAAKIALGLGADVTILDVN) is an NAD(+) binding site.

Belongs to the AlaDH/PNT family.

It catalyses the reaction L-alanine + NAD(+) + H2O = pyruvate + NH4(+) + NADH + H(+). It functions in the pathway amino-acid degradation; L-alanine degradation via dehydrogenase pathway; NH(3) and pyruvate from L-alanine: step 1/1. Its function is as follows. May play a role in cell wall synthesis as L-alanine is an important constituent of the peptidoglycan layer. In Staphylococcus aureus (strain COL), this protein is Alanine dehydrogenase 2 (ald2).